Here is a 193-residue protein sequence, read N- to C-terminus: Peptidyl-tRNA hydrolase 1 (193 aa).

Position 27 (Y27) interacts with tRNA. Catalysis depends on H32, which acts as the Proton acceptor. 3 residues coordinate tRNA: F80, N82, and N128.

The protein belongs to the PTH family. Monomer.

The protein resides in the cytoplasm. It carries out the reaction an N-acyl-L-alpha-aminoacyl-tRNA + H2O = an N-acyl-L-amino acid + a tRNA + H(+). Its function is as follows. Hydrolyzes ribosome-free peptidyl-tRNAs (with 1 or more amino acids incorporated), which drop off the ribosome during protein synthesis, or as a result of ribosome stalling. Functionally, catalyzes the release of premature peptidyl moieties from peptidyl-tRNA molecules trapped in stalled 50S ribosomal subunits, and thus maintains levels of free tRNAs and 50S ribosomes. This Corynebacterium jeikeium (strain K411) protein is Peptidyl-tRNA hydrolase 1.